Here is a 283-residue protein sequence, read N- to C-terminus: ATP synthase gamma chain (283 aa).

Belongs to the ATPase gamma chain family. As to quaternary structure, F-type ATPases have 2 components, CF(1) - the catalytic core - and CF(0) - the membrane proton channel. CF(1) has five subunits: alpha(3), beta(3), gamma(1), delta(1), epsilon(1). CF(0) has three main subunits: a, b and c.

The protein localises to the cell membrane. Its function is as follows. Produces ATP from ADP in the presence of a proton gradient across the membrane. The gamma chain is believed to be important in regulating ATPase activity and the flow of protons through the CF(0) complex. This Clostridium kluyveri (strain NBRC 12016) protein is ATP synthase gamma chain.